The following is a 459-amino-acid chain: Sperm-tail PG-rich repeat-containing protein 2 (459 aa).

STPGR repeat units follow at residues 21–30, 63–73, 119–148, 157–203, 213–243, 257–268, 351–377, 400–410, and 433–443; these read VGPGSYQVPF, PGPGHYNVSEA, TLGP…NSSG, GPGP…QEKK, TPAP…FGQS, PGPGFYNVLNNT, PAPG…PRSL, GPGPAAYNPVL, and TPGPATYEISQ.

This Homo sapiens (Human) protein is Sperm-tail PG-rich repeat-containing protein 2 (STPG2).